We begin with the raw amino-acid sequence, 89 residues long: DNA/RNA-binding protein Alba 2 (89 aa).

It belongs to the histone-like Alba family. As to quaternary structure, forms homodimers and homotetramers. Interacts with Alba 1.

It is found in the cytoplasm. The protein resides in the chromosome. In terms of biological role, binds double-stranded DNA tightly but without sequence specificity. Involved in DNA compaction. The polypeptide is DNA/RNA-binding protein Alba 2 (Archaeoglobus fulgidus (strain ATCC 49558 / DSM 4304 / JCM 9628 / NBRC 100126 / VC-16)).